A 140-amino-acid chain; its full sequence is Ubiquitin-like protein ATG12 (140 aa).

The tract at residues 1-50 is disordered; it reads MAEEPQSVLQLPTSIAAGGEGLTDVSPETTTPEPPSSAAVSPGTEEPAGD. Over residues 25-42 the composition is skewed to low complexity; sequence VSPETTTPEPPSSAAVSP. A Glycyl lysine isopeptide (Gly-Lys) (interchain with K-130 in ATG5) cross-link involves residue glycine 140.

This sequence belongs to the ATG12 family. As to quaternary structure, forms a conjugate with ATG5. Part of the minor complex composed of 4 sets of ATG12-ATG5 and ATG16L1 (400 kDa); this complex interacts with ATG3 leading to disruption of ATG7 interaction and promotion of ATG8-like proteins lipidation. Forms an 800-kDa complex composed of ATG12-ATG5 and ATG16L2. Interacts with DHX58/RIG-1, IFIH1/MDA5 and MAVS/IPS-1 in monomeric form as well as in ATG12-ATG5 conjugate. The interaction with MAVS is further enhanced upon vesicular stomatitis virus (VSV) infection. Interacts with ATG3; this interaction is essential for phosphatidylethanolamine (PE)-conjugated ATG8-like proteins formation. Interacts with ATG7. Interacts with ATG10. The ATG12-ATG5 conjugate interacts with RAB33A; this interaction is bridged by ATG16L1 and promotes ATG12-ATG5-ATG16L1 complex recruitment to phagophores. Interacts with TECPR1. Interacts with SH3BGRL. The ATG12-ATG5 conjugate interacts with PDCD6IP (via the BRO1 domain); this interaction is bridged by ATG12 and promotes multiple PDCD6IP-mediated functions such as endolysosomal trafficking, macroautophagy and exosome biogenesis. Post-translationally, acetylated by EP300. Ubiquitous.

It is found in the cytoplasm. The protein localises to the preautophagosomal structure membrane. Its function is as follows. Ubiquitin-like protein involved in autophagy vesicles formation. Conjugation with ATG5 through a ubiquitin-like conjugating system involving also ATG7 as an E1-like activating enzyme and ATG10 as an E2-like conjugating enzyme, is essential for its function. The ATG12-ATG5 conjugate acts as an E3-like enzyme which is required for lipidation of ATG8 family proteins and their association to the vesicle membranes. As part of the ATG8 conjugation system with ATG5 and ATG16L1, required for recruitment of LRRK2 to stressed lysosomes and induction of LRRK2 kinase activity in response to lysosomal stress. In terms of biological role, (Microbial infection) May act as a proviral factor. In association with ATG5, negatively regulates the innate antiviral immune response by impairing the type I IFN production pathway upon vesicular stomatitis virus (VSV) infection. Required for the translation of incoming hepatitis C virus (HCV) RNA and, thereby, for the initiation of HCV replication, but not required once infection is established. The sequence is that of Ubiquitin-like protein ATG12 from Homo sapiens (Human).